We begin with the raw amino-acid sequence, 159 residues long: Probable minor fimbrial protein (159 aa).

Residues 1–6 constitute a propeptide, leader sequence; the sequence is MKKMHG. Phe-7 is modified (N-methylphenylalanine). The chain crosses the membrane as a helical span at residues 7–29; sequence FTLIELMIVVAIIGVLASIALMQ. 2 disulfide bridges follow: Cys-56-Cys-71 and Cys-140-Cys-153.

It belongs to the N-Me-Phe pilin family. As to quaternary structure, the pili are polar flexible filaments of about 5.4 nanometers diameter and 2.5 micrometers average length; they consist of only a single polypeptide chain arranged in a helical configuration of five subunits per turn in the assembled pilus.

Its subcellular location is the fimbrium. The protein resides in the membrane. The sequence is that of Probable minor fimbrial protein (fimZ) from Dichelobacter nodosus (Bacteroides nodosus).